The sequence spans 276 residues: NADPH-dependent 7-cyano-7-deazaguanine reductase (276 aa).

83–85 (IES) contacts substrate. Residue 85–86 (SK) participates in NADPH binding. The active-site Thioimide intermediate is cysteine 184. Aspartate 191 serves as the catalytic Proton donor. Position 223-224 (223-224 (HE)) interacts with substrate. NADPH is bound at residue 252–253 (RG).

The protein belongs to the GTP cyclohydrolase I family. QueF type 2 subfamily. As to quaternary structure, homodimer.

It is found in the cytoplasm. It carries out the reaction 7-aminomethyl-7-carbaguanine + 2 NADP(+) = 7-cyano-7-deazaguanine + 2 NADPH + 3 H(+). It functions in the pathway tRNA modification; tRNA-queuosine biosynthesis. Its function is as follows. Catalyzes the NADPH-dependent reduction of 7-cyano-7-deazaguanine (preQ0) to 7-aminomethyl-7-deazaguanine (preQ1). This Pseudomonas entomophila (strain L48) protein is NADPH-dependent 7-cyano-7-deazaguanine reductase.